A 403-amino-acid polypeptide reads, in one-letter code: uncharacterized protein (403 aa).

Helical transmembrane passes span 25–47, 62–81, 88–110, 114–136, 143–165, 175–197, 229–251, 256–278, 290–307, 311–330, 350–372, and 376–398; these read IAFF…ILFL, SLSA…GPLS, VVMS…MNSW, IFMR…TYLS, VLSF…GRFL, WNIA…VYLL, LFFM…GYRL, FFLG…YSSP, GVIL…VLIT, IVLL…FAAH, SIYL…IFWI, and WLGI…IRLL.

The protein belongs to the major facilitator superfamily.

It is found in the cell membrane. This is an uncharacterized protein from Buchnera aphidicola subsp. Baizongia pistaciae (strain Bp).